The chain runs to 52 residues: uncharacterized protein (52 aa).

The stretch at 3–46 (KIQLESSNQSVLKLEERRLNLTAEIERIYGQMDLKRKELENANL) forms a coiled coil.

This is an uncharacterized protein from Dictyostelium discoideum (Social amoeba).